A 190-amino-acid chain; its full sequence is Recombination protein RecR (190 aa).

The C4-type zinc-finger motif lies at 58–73 (CGQCGALSENELCEIC). The region spanning 81–167 (NILCIVESPK…TFSKIAQGIP (87 aa)) is the Toprim domain.

It belongs to the RecR family.

May play a role in DNA repair. It seems to be involved in an RecBC-independent recombinational process of DNA repair. It may act with RecF and RecO. The chain is Recombination protein RecR from Campylobacter jejuni subsp. jejuni serotype O:6 (strain 81116 / NCTC 11828).